A 363-amino-acid chain; its full sequence is Protein-glutamate methylesterase/protein-glutamine glutaminase 1 (363 aa).

One can recognise a Response regulatory domain in the interval 7-124 (KVLIVDDSAL…SRGMQEYARE (118 aa)). Aspartate 58 carries the 4-aspartylphosphate modification. Residues 164-356 (FSSTEKIIVI…RRLFGWLESQ (193 aa)) enclose the CheB-type methylesterase domain. Residues serine 176, histidine 202, and aspartate 298 contribute to the active site.

The protein belongs to the CheB family. Post-translationally, phosphorylated by CheA. Phosphorylation of the N-terminal regulatory domain activates the methylesterase activity.

It is found in the cytoplasm. It catalyses the reaction [protein]-L-glutamate 5-O-methyl ester + H2O = L-glutamyl-[protein] + methanol + H(+). The enzyme catalyses L-glutaminyl-[protein] + H2O = L-glutamyl-[protein] + NH4(+). Its function is as follows. Involved in chemotaxis. Part of a chemotaxis signal transduction system that modulates chemotaxis in response to various stimuli. Catalyzes the demethylation of specific methylglutamate residues introduced into the chemoreceptors (methyl-accepting chemotaxis proteins or MCP) by CheR. Also mediates the irreversible deamidation of specific glutamine residues to glutamic acid. This chain is Protein-glutamate methylesterase/protein-glutamine glutaminase 1, found in Geobacter metallireducens (strain ATCC 53774 / DSM 7210 / GS-15).